Here is an 82-residue protein sequence, read N- to C-terminus: Large ribosomal subunit protein uL23 (82 aa).

This sequence belongs to the universal ribosomal protein uL23 family. Part of the 50S ribosomal subunit. Contacts protein L29.

In terms of biological role, binds to 23S rRNA. One of the proteins that surrounds the polypeptide exit tunnel on the outside of the ribosome. The sequence is that of Large ribosomal subunit protein uL23 from Natronomonas pharaonis (strain ATCC 35678 / DSM 2160 / CIP 103997 / JCM 8858 / NBRC 14720 / NCIMB 2260 / Gabara) (Halobacterium pharaonis).